The sequence spans 209 residues: Large ribosomal subunit protein uL3 (209 aa).

The interval 129–153 (SRGPMSHGSKFHRAPGSMGAASDPS) is disordered.

This sequence belongs to the universal ribosomal protein uL3 family. Part of the 50S ribosomal subunit. Forms a cluster with proteins L14 and L19.

Its function is as follows. One of the primary rRNA binding proteins, it binds directly near the 3'-end of the 23S rRNA, where it nucleates assembly of the 50S subunit. This Clostridium perfringens (strain 13 / Type A) protein is Large ribosomal subunit protein uL3.